The sequence spans 119 residues: Holo-[acyl-carrier-protein] synthase (119 aa).

Asp8 and Glu58 together coordinate Mg(2+).

It belongs to the P-Pant transferase superfamily. AcpS family. Requires Mg(2+) as cofactor.

It localises to the cytoplasm. It carries out the reaction apo-[ACP] + CoA = holo-[ACP] + adenosine 3',5'-bisphosphate + H(+). Functionally, transfers the 4'-phosphopantetheine moiety from coenzyme A to a Ser of acyl-carrier-protein. The polypeptide is Holo-[acyl-carrier-protein] synthase (Bacillus cereus (strain B4264)).